The primary structure comprises 624 residues: Laccase-1 (624 aa).

Residues 1-20 (MRGLAKLFFLSCSFVSLVSS) form the signal peptide. Plastocyanin-like domains follow at residues 72–183 (FASP…HSPN) and 195–343 (DRIV…CMFG). Cu cation-binding residues include H117 and H119. C138 and C578 form a disulfide bridge. N149 is a glycosylation site (N-linked (GlcNAc...) asparagine). 2 residues coordinate Cu cation: H162 and H164. 2 N-linked (GlcNAc...) asparagine glycosylation sites follow: N242 and N430. Positions 469-562 (IIINNLDTVI…GKLAVIVVQP (94 aa)) constitute a Plastocyanin-like 3 domain. Positions 480, 483, and 485 each coordinate Cu cation. N503 carries an N-linked (GlcNAc...) asparagine glycan. Cu cation-binding residues include H543, C544, H545, and H549. Residues 579-604 (ANTDPNAFGPAKRSSSPSIQSSKTSS) form a disordered region. A compositionally biased stretch (low complexity) spans 592-604 (SSSPSIQSSKTSS).

It belongs to the multicopper oxidase family. The cofactor is Cu cation.

It is found in the secreted. Its subcellular location is the cell wall. The enzyme catalyses 4 hydroquinone + O2 = 4 benzosemiquinone + 2 H2O. Functionally, laccase that catalyzes the oxidation of certain aromatic compounds, including L-dopa, to quinones, which then polymerize to melanin. Able to oxidize a wide variety of aromatic diphenol and diamino groups in the ortho, meta, and para positions but not monophenolic groups such as in phenol, tyramine, or tyrosine. Plays an important role in virulence. Plays a role in dissemination to extrapulmonary sites but is not involved in pulmonary growth or in elicitation of cellular immune responses in the lung. This is Laccase-1 from Cryptococcus neoformans var. neoformans serotype D (strain B-3501A) (Filobasidiella neoformans).